A 531-amino-acid polypeptide reads, in one-letter code: GMP synthase [glutamine-hydrolyzing] (531 aa).

Residues 20 to 213 (KILIVDFGSQ…VRKVAGLKGD (194 aa)) form the Glutamine amidotransferase type-1 domain. Cys-97 functions as the Nucleophile in the catalytic mechanism. Catalysis depends on residues His-187 and Glu-189. Positions 214–406 (WTMRAFREEA…LGLPDVFVGR (193 aa)) constitute a GMPS ATP-PPase domain. 241-247 (SGGVDSA) is an ATP binding site.

As to quaternary structure, homodimer.

The enzyme catalyses XMP + L-glutamine + ATP + H2O = GMP + L-glutamate + AMP + diphosphate + 2 H(+). The protein operates within purine metabolism; GMP biosynthesis; GMP from XMP (L-Gln route): step 1/1. Functionally, catalyzes the synthesis of GMP from XMP. This chain is GMP synthase [glutamine-hydrolyzing], found in Afipia carboxidovorans (strain ATCC 49405 / DSM 1227 / KCTC 32145 / OM5) (Oligotropha carboxidovorans).